A 391-amino-acid polypeptide reads, in one-letter code: 4-hydroxy-3-methylbut-2-en-1-yl diphosphate synthase (flavodoxin) (391 aa).

The [4Fe-4S] cluster site is built by Cys281, Cys284, Cys316, and Glu323. The tract at residues 372 to 391 (EMGGEDGQGGIKGSPVVSVS) is disordered.

The protein belongs to the IspG family. [4Fe-4S] cluster is required as a cofactor.

It catalyses the reaction (2E)-4-hydroxy-3-methylbut-2-enyl diphosphate + oxidized [flavodoxin] + H2O + 2 H(+) = 2-C-methyl-D-erythritol 2,4-cyclic diphosphate + reduced [flavodoxin]. It participates in isoprenoid biosynthesis; isopentenyl diphosphate biosynthesis via DXP pathway; isopentenyl diphosphate from 1-deoxy-D-xylulose 5-phosphate: step 5/6. Converts 2C-methyl-D-erythritol 2,4-cyclodiphosphate (ME-2,4cPP) into 1-hydroxy-2-methyl-2-(E)-butenyl 4-diphosphate. This is 4-hydroxy-3-methylbut-2-en-1-yl diphosphate synthase (flavodoxin) from Renibacterium salmoninarum (strain ATCC 33209 / DSM 20767 / JCM 11484 / NBRC 15589 / NCIMB 2235).